Consider the following 310-residue polypeptide: ADP-L-glycero-D-manno-heptose-6-epimerase (310 aa).

Residues 10-11, 31-32, Lys38, Lys53, 75-79, and Asn92 each bind NADP(+); these read FI, DN, and EGACS. Catalysis depends on Tyr140, which acts as the Proton acceptor. Position 144 (Lys144) interacts with NADP(+). Asn169 is a binding site for substrate. Val170 and Lys178 together coordinate NADP(+). Lys178 (proton acceptor) is an active-site residue. Substrate-binding positions include Gly180, His187, 201-204, Arg209, and Tyr272; that span reads FAGS.

The protein belongs to the NAD(P)-dependent epimerase/dehydratase family. HldD subfamily. In terms of assembly, homopentamer. The cofactor is NADP(+).

It catalyses the reaction ADP-D-glycero-beta-D-manno-heptose = ADP-L-glycero-beta-D-manno-heptose. The protein operates within nucleotide-sugar biosynthesis; ADP-L-glycero-beta-D-manno-heptose biosynthesis; ADP-L-glycero-beta-D-manno-heptose from D-glycero-beta-D-manno-heptose 7-phosphate: step 4/4. Its function is as follows. Catalyzes the interconversion between ADP-D-glycero-beta-D-manno-heptose and ADP-L-glycero-beta-D-manno-heptose via an epimerization at carbon 6 of the heptose. This chain is ADP-L-glycero-D-manno-heptose-6-epimerase, found in Sodalis glossinidius (strain morsitans).